The chain runs to 210 residues: Germin-like protein subfamily 3 member 4 (210 aa).

Residues 1–18 (MKFFVVIVFCAIFLSVSG) form the signal peptide. A disulfide bridge connects residues C27 and C44. In terms of domain architecture, Cupin type-1 spans 58–190 (TKLTEAGDTD…VFGIDQEHIK (133 aa)). A glycan (N-linked (GlcNAc...) asparagine) is linked at N73. Mn(2+)-binding residues include H106, H108, E113, and H152.

The protein belongs to the germin family. In terms of assembly, oligomer (believed to be a pentamer but probably hexamer).

It localises to the secreted. Its subcellular location is the extracellular space. It is found in the apoplast. Functionally, may play a role in plant defense. Probably has no oxalate oxidase activity even if the active site is conserved. In Arabidopsis thaliana (Mouse-ear cress), this protein is Germin-like protein subfamily 3 member 4.